A 105-amino-acid chain; its full sequence is Small ribosomal subunit protein uS10 (105 aa).

It belongs to the universal ribosomal protein uS10 family. In terms of assembly, part of the 30S ribosomal subunit.

In terms of biological role, involved in the binding of tRNA to the ribosomes. The polypeptide is Small ribosomal subunit protein uS10 (Desulfovibrio desulfuricans (strain ATCC 27774 / DSM 6949 / MB)).